The following is a 351-amino-acid chain: Anthranilate phosphoribosyltransferase (351 aa).

Residues Gly90, 93–94, Thr98, 100–103, 118–126, and Ser130 contribute to the 5-phospho-alpha-D-ribose 1-diphosphate site; these read GD, NIST, and KHGNRSASG. Residue Gly90 participates in anthranilate binding. Position 102 (Ser102) interacts with Mg(2+). Asn121 contributes to the anthranilate binding site. Arg176 provides a ligand contact to anthranilate. Mg(2+)-binding residues include Asp235 and Glu236.

This sequence belongs to the anthranilate phosphoribosyltransferase family. Homodimer. It depends on Mg(2+) as a cofactor.

The catalysed reaction is N-(5-phospho-beta-D-ribosyl)anthranilate + diphosphate = 5-phospho-alpha-D-ribose 1-diphosphate + anthranilate. The protein operates within amino-acid biosynthesis; L-tryptophan biosynthesis; L-tryptophan from chorismate: step 2/5. In terms of biological role, catalyzes the transfer of the phosphoribosyl group of 5-phosphorylribose-1-pyrophosphate (PRPP) to anthranilate to yield N-(5'-phosphoribosyl)-anthranilate (PRA). The polypeptide is Anthranilate phosphoribosyltransferase (Prochlorococcus marinus (strain MIT 9313)).